A 509-amino-acid polypeptide reads, in one-letter code: Phosphoenolpyruvate carboxylase (509 aa).

This sequence belongs to the PEPCase type 2 family. In terms of assembly, homotetramer. The cofactor is Mg(2+).

The enzyme catalyses oxaloacetate + phosphate = phosphoenolpyruvate + hydrogencarbonate. Its function is as follows. Catalyzes the irreversible beta-carboxylation of phosphoenolpyruvate (PEP) to form oxaloacetate (OAA), a four-carbon dicarboxylic acid source for the tricarboxylic acid cycle. This Metallosphaera sedula (strain ATCC 51363 / DSM 5348 / JCM 9185 / NBRC 15509 / TH2) protein is Phosphoenolpyruvate carboxylase.